A 309-amino-acid polypeptide reads, in one-letter code: Mitochondrial phosphate carrier protein 1, mitochondrial (309 aa).

Residues 1-15 lie on the Mitochondrial intermembrane side of the membrane; sequence MTRVKSKLDEELSSP. Residues 16 to 36 traverse the membrane as a helical segment; it reads WFYTVCTMGGMLSAGTTHLAI. Solcar repeat units follow at residues 16–100, 109–193, and 210–289; these read WFYT…FKTL, NRTS…SVEF, and QQLG…IKVL. The Mitochondrial matrix portion of the chain corresponds to 37 to 74; it reads TPLDVLKVNMQVNPVKYNSIPSGFSTLLREHGHSYLWR. A helical membrane pass occupies residues 75–94; that stretch reads GWSGKLLGYGVQGGCRFGLY. Residues 95–111 are Mitochondrial intermembrane-facing; sequence EYFKTLYSDVLPNHNRT. The chain crosses the membrane as a helical span at residues 112-132; sequence SIYFLSSASAQIFADMALCPF. The Mitochondrial matrix portion of the chain corresponds to 133-167; it reads EAIKVRVQTQPMFAKGLLDGFPRVYRSEGLAGFHR. Residues 168 to 187 traverse the membrane as a helical segment; the sequence is GLFPLWCRNLPFSMVMFSTF. The Mitochondrial intermembrane portion of the chain corresponds to 188–208; the sequence is EQSVEFIYQKIIQKRKQDCSK. A helical membrane pass occupies residues 209-229; sequence AQQLGVTCLAGYTAGAVGTII. At 230–268 the chain is on the mitochondrial matrix side; it reads SNPADVVLSSLYNNKAKNVLQAVRNIGFVGLFTRSLPVR. Residues 269-289 traverse the membrane as a helical segment; sequence ITIVGPVITLQWFFYDAIKVL. The Mitochondrial intermembrane portion of the chain corresponds to 290–309; the sequence is SGFPTSGGVKKPVDAAKLSV.

The protein belongs to the mitochondrial carrier (TC 2.A.29) family. In terms of tissue distribution, expressed in stems, leaves and flowers. Strong expression in the stamens of flowers.

Its subcellular location is the mitochondrion inner membrane. Transport of phosphate groups from the cytosol to the mitochondrial matrix. Mediates salt stress tolerance through an ATP-dependent pathway and via modulation of the gibberellin metabolism. The polypeptide is Mitochondrial phosphate carrier protein 1, mitochondrial (MPT1) (Arabidopsis thaliana (Mouse-ear cress)).